Here is a 438-residue protein sequence, read N- to C-terminus: Drainin (438 aa).

The stretch at proline 54–lysine 104 forms a coiled coil. A Rab-GAP TBC domain is found at glycine 133–glycine 374.

It localises to the contractile vacuole membrane. Its subcellular location is the cytoplasm. Functionally, may act as a GTPase-activating protein for Rab family protein(s). Required for osmotic regulation by the contractile vacuole in hypo-osmotic environments. Essential for periodic fusion of the contractile vacuole with the plasma membrane and consequent expulsion of water from the cell body. This is Drainin (phgA) from Dictyostelium discoideum (Social amoeba).